A 129-amino-acid polypeptide reads, in one-letter code: UPF0325 protein YPTS_3127 (129 aa).

This sequence belongs to the UPF0325 family.

This chain is UPF0325 protein YPTS_3127, found in Yersinia pseudotuberculosis serotype IB (strain PB1/+).